Consider the following 126-residue polypeptide: Large ribosomal subunit protein bL19 (126 aa).

It belongs to the bacterial ribosomal protein bL19 family.

This protein is located at the 30S-50S ribosomal subunit interface and may play a role in the structure and function of the aminoacyl-tRNA binding site. The chain is Large ribosomal subunit protein bL19 from Gluconacetobacter diazotrophicus (strain ATCC 49037 / DSM 5601 / CCUG 37298 / CIP 103539 / LMG 7603 / PAl5).